Reading from the N-terminus, the 24-residue chain is Brevinin-1Pe (24 aa).

Cysteines 18 and 24 form a disulfide.

Expressed by the skin glands.

It localises to the secreted. Its function is as follows. Antibacterial activity against Gram-positive bacterium S.aureus and Gram-negative bacterium E.coli. Has activity against C.albicans. This is Brevinin-1Pe from Lithobates pipiens (Northern leopard frog).